Reading from the N-terminus, the 470-residue chain is 3-isopropylmalate dehydratase large subunit (470 aa).

[4Fe-4S] cluster contacts are provided by C351, C411, and C414.

Belongs to the aconitase/IPM isomerase family. LeuC type 1 subfamily. Heterodimer of LeuC and LeuD. It depends on [4Fe-4S] cluster as a cofactor.

The enzyme catalyses (2R,3S)-3-isopropylmalate = (2S)-2-isopropylmalate. The protein operates within amino-acid biosynthesis; L-leucine biosynthesis; L-leucine from 3-methyl-2-oxobutanoate: step 2/4. Catalyzes the isomerization between 2-isopropylmalate and 3-isopropylmalate, via the formation of 2-isopropylmaleate. This chain is 3-isopropylmalate dehydratase large subunit, found in Rhodopseudomonas palustris (strain HaA2).